A 70-amino-acid polypeptide reads, in one-letter code: ATP synthase subunit epsilon, mitochondrial (70 aa).

The protein belongs to the eukaryotic ATPase epsilon family. In terms of assembly, F-type ATPases have 2 components, CF(1) - the catalytic core - and CF(0) - the membrane proton channel. CF(1) has five subunits: alpha(3), beta(3), gamma(1), delta(1), epsilon(1). CF(0) has three main subunits: a, b and c.

It is found in the mitochondrion. The protein localises to the mitochondrion inner membrane. Its function is as follows. Mitochondrial membrane ATP synthase (F(1)F(0) ATP synthase or Complex V) produces ATP from ADP in the presence of a proton gradient across the membrane which is generated by electron transport complexes of the respiratory chain. F-type ATPases consist of two structural domains, F(1) - containing the extramembraneous catalytic core, and F(0) - containing the membrane proton channel, linked together by a central stalk and a peripheral stalk. During catalysis, ATP synthesis in the catalytic domain of F(1) is coupled via a rotary mechanism of the central stalk subunits to proton translocation. Part of the complex F(1) domain and of the central stalk which is part of the complex rotary element. Rotation of the central stalk against the surrounding alpha(3)beta(3) subunits leads to hydrolysis of ATP in three separate catalytic sites on the beta subunits. The polypeptide is ATP synthase subunit epsilon, mitochondrial (Ipomoea batatas (Sweet potato)).